A 610-amino-acid chain; its full sequence is Solute carrier family 2, facilitated glucose transporter member 12 (610 aa).

Topologically, residues 1–49 (MDAPEESIRMTSDPQSKIYVQNPDTHIHLEQGPSAKSGNGRALVLCSVS) are cytoplasmic. The chain crosses the membrane as a helical span at residues 50–70 (VACLSGLLMGYEMSLISGALL). The Extracellular portion of the chain corresponds to 71–84 (QLRDVLTLSCPEQE). A helical transmembrane segment spans residues 85–105 (QVVGSLLLGAFLLSLGGGTIL). Over 106–118 (DHYGRRFTIILTA) the chain is Cytoplasmic. The helical transmembrane segment at 119-139 (LLCVLGTLLSVCVVSFWALVV) threads the bilayer. The Extracellular portion of the chain corresponds to 140–141 (GR). A helical transmembrane segment spans residues 142–162 (MLVGMSVALSGTASCLYAAEV). At 163–176 (APAAWRGRCVCVYE) the chain is on the cytoplasmic side. The helical transmembrane segment at 177 to 197 (LMVVLGMLLGFGLSWAFAGVP) threads the bilayer. Topologically, residues 198–201 (DGWR) are extracellular. Residues 202 to 222 (FTFGGALLPALLQAGVMPLLP) form a helical membrane-spanning segment. The Cytoplasmic portion of the chain corresponds to 223–286 (DSPRFLLAQQ…FQSRDNMLQR (64 aa)). A helical transmembrane segment spans residues 287 to 307 (LLVGAALVFLQQATGQPNILA). The Extracellular segment spans residues 308-325 (YASTVLSSVGFHGNEAAT). The chain crosses the membrane as a helical span at residues 326 to 346 (LASTGFGVVKVGGTIPAIFLV). Residues 347-353 (DKVGPKA) are Cytoplasmic-facing. Residues 354–374 (LLCVGVVVMMLSTATLGAITM) form a helical membrane-spanning segment. At 375–475 (QSRTHVSSLC…LHEVSPSLKW (101 aa)) the chain is on the extracellular side. N392, N429, and N438 each carry an N-linked (GlcNAc...) asparagine glycan. The chain crosses the membrane as a helical span at residues 476-496 (ISLVSLLVYVAGFSISLGPMV). At 497-511 (HVVLSAIFPTGIRGK) the chain is on the cytoplasmic side. The helical transmembrane segment at 512–532 (AVSVISAFNWATNLLISMTFL) threads the bilayer. Residues 533 to 542 (TLTERIGLPT) are Extracellular-facing. The chain crosses the membrane as a helical span at residues 543-563 (VIFSYSAMSFLLVVFVIVFVP). Residues 564 to 610 (ETKGRSLEQISKELAMKNHLRGTLLCHRRKHKATAQPSQEEKALATV) are Cytoplasmic-facing.

It belongs to the major facilitator superfamily. Sugar transporter (TC 2.A.1.1) family. Glucose transporter subfamily. In terms of tissue distribution, expressed in the main insulin-sensitive tissues, such as cardiac muscle, skeletal muscle and adipose tissue.

The protein localises to the cell membrane. Its subcellular location is the endomembrane system. It localises to the cytoplasm. It is found in the perinuclear region. It catalyses the reaction D-glucose(out) = D-glucose(in). Functionally, insulin-regulated facilitative glucose transporter. This is Solute carrier family 2, facilitated glucose transporter member 12 from Danio rerio (Zebrafish).